Reading from the N-terminus, the 561-residue chain is MRLWKSMAWGILLWHSQSGALCPAWPPARAAEEIARLQQQLADWNDIYWKQGVSAVDDSVYDQLSARLVQWQRCVGQDVSSTPVSPPLNGTTMHPVAHTGVRKLADRQAVEQWMRGRSELWVQPKVDGVAVTLVYQNGKLARAISRGNGLQGEDWTPKIRLIPSIPQTTQGALANAVLQGEIFLQREGHIQQRMGGMNARSKVAGMLMRQDNASALNSLGIFIWAWPDGPANMPERLSQLAKAGFSLTKKYSLAVKNASEVERARQSWLTSALPFVTDGVVIRMAKEPASQHWRPGQGDWLAAWKYPPVAQVAQVSAIQFSVGKSGKITVVASLVPVILDDKRVQRVNIGSVKRWEAWDIAPGDQILVSLAGQGIPRLDEVVWRSRERSKPVPPDSHFNSLTCFYASETCQEQFISRLVWLGSRSALGLDGMGEASWRALHQTHRFEHIFSWLALTSAQIANTPGFAKGKSEQIWRQFNLARRQPFTRWIMAMDIPLTQAALQASGDRSWEQLLMRTEQHWRQLPATGERRAGRVIDWRDNPQIKTLSRWLAAQHIPGFGS.

Catalysis depends on Lys125, which acts as the N6-AMP-lysine intermediate.

It belongs to the NAD-dependent DNA ligase family. LigB subfamily.

The catalysed reaction is NAD(+) + (deoxyribonucleotide)n-3'-hydroxyl + 5'-phospho-(deoxyribonucleotide)m = (deoxyribonucleotide)n+m + AMP + beta-nicotinamide D-nucleotide.. In terms of biological role, catalyzes the formation of phosphodiester linkages between 5'-phosphoryl and 3'-hydroxyl groups in double-stranded DNA using NAD as a coenzyme and as the energy source for the reaction. This is DNA ligase B from Salmonella paratyphi B (strain ATCC BAA-1250 / SPB7).